The following is a 223-amino-acid chain: B-cell antigen receptor complex-associated protein alpha chain (223 aa).

The signal sequence occupies residues 1 to 31 (MPEGPQALQSPPATIFLLLISAAGLGPGCQA). Residues 32-120 (LWVEWGPPSV…KIQRSCGTYL (89 aa)) enclose the Ig-like C2-type domain. Residues 32-140 (LWVEWGPPSV…LDMGEGTKNN (109 aa)) are Extracellular-facing. Cysteine 53 and cysteine 104 are joined by a disulfide. 4 N-linked (GlcNAc...) asparagine glycosylation sites follow: asparagine 56, asparagine 61, asparagine 71, and asparagine 95. A helical membrane pass occupies residues 141 to 161 (IITAEGIILLICAVVPGTLLL). Residues 162 to 223 (FRKRWQNMKF…HIGDAQLEKP (62 aa)) are Cytoplasmic-facing. One can recognise an ITAM domain in the interval 174–202 (DIQDDYEDENLYEGLNLDDCSMYEDISRG). Tyrosine 185 is modified (phosphotyrosine; by SRC-type Tyr-kinases). At tyrosine 196 the chain carries Phosphotyrosine. The residue at position 201 (arginine 201) is an Asymmetric dimethylarginine; by PRMT1. Tyrosine 207 is subject to Phosphotyrosine; by Tyr-kinases.

As to quaternary structure, heterodimer of alpha and beta chains; disulfide-linked. Part of the B-cell antigen receptor complex where the alpha/beta chain heterodimer is non-covalently associated with an antigen-specific membrane-bound surface immunoglobulin of two heavy chains and two light chains. Interacts through its phosphorylated ITAM domain with the SH2 domains of SYK which stimulates SYK autophosphorylation and activation. Also interacts, when phosphorylated on Tyr-207, with the SH2 domain of BLNK/SLP65, bringing BLNK into proximity with SYK and allowing SYK to phosphorylate BLNK which is necessary for trafficking of the BCR to late endosomes. Interacts with Src-family tyrosine kinases including FYN and LYN, increasing their activity. Phosphorylated on tyrosine, serine and threonine residues upon B-cell activation. Phosphorylation of tyrosine residues by Src-family kinases, including LYN, is an early and essential feature of the BCR signaling cascade. The phosphorylated tyrosines serve as docking sites for SH2-domain containing kinases, leading to their activation which in turn leads to phosphorylation of downstream targets. Phosphorylation of serine and threonine residues may prevent subsequent tyrosine phosphorylation. In terms of processing, arginine methylation in the ITAM domain may interfere with the binding of SYK. It promotes signals leading to B-cell differentiation. B-cells.

The protein resides in the cell membrane. In terms of biological role, required in cooperation with CD79B for initiation of the signal transduction cascade activated by binding of antigen to the B-cell antigen receptor complex (BCR) which leads to internalization of the complex, trafficking to late endosomes and antigen presentation. Also required for BCR surface expression and for efficient differentiation of pro- and pre-B-cells. Stimulates SYK autophosphorylation and activation. Binds to BLNK, bringing BLNK into proximity with SYK and allowing SYK to phosphorylate BLNK. Also interacts with and increases activity of some Src-family tyrosine kinases. Represses BCR signaling during development of immature B-cells. In Bos taurus (Bovine), this protein is B-cell antigen receptor complex-associated protein alpha chain (CD79A).